The sequence spans 556 residues: 2-succinyl-5-enolpyruvyl-6-hydroxy-3-cyclohexene-1-carboxylate synthase (556 aa).

Belongs to the TPP enzyme family. MenD subfamily. In terms of assembly, homodimer. Mg(2+) serves as cofactor. It depends on Mn(2+) as a cofactor. Requires thiamine diphosphate as cofactor.

It catalyses the reaction isochorismate + 2-oxoglutarate + H(+) = 5-enolpyruvoyl-6-hydroxy-2-succinyl-cyclohex-3-ene-1-carboxylate + CO2. It functions in the pathway quinol/quinone metabolism; 1,4-dihydroxy-2-naphthoate biosynthesis; 1,4-dihydroxy-2-naphthoate from chorismate: step 2/7. It participates in quinol/quinone metabolism; menaquinone biosynthesis. Catalyzes the thiamine diphosphate-dependent decarboxylation of 2-oxoglutarate and the subsequent addition of the resulting succinic semialdehyde-thiamine pyrophosphate anion to isochorismate to yield 2-succinyl-5-enolpyruvyl-6-hydroxy-3-cyclohexene-1-carboxylate (SEPHCHC). This chain is 2-succinyl-5-enolpyruvyl-6-hydroxy-3-cyclohexene-1-carboxylate synthase, found in Staphylococcus epidermidis (strain ATCC 35984 / DSM 28319 / BCRC 17069 / CCUG 31568 / BM 3577 / RP62A).